The following is a 998-amino-acid chain: Protein Smaug (998 aa).

Residues 1–37 (MKYATGTDNAMTSGISGQTNSSNSASNEMQPTTSTPT) are compositionally biased toward polar residues. 3 disordered regions span residues 1-45 (MKYA…EATS), 50-69 (TATY…QSQP), and 329-370 (LCPA…GSSS). A compositionally biased stretch (low complexity) spans 329-338 (LCPASGSRSS). 2 positions are modified to phosphoserine: serine 564 and serine 575. The interval 583-763 (EFKPNYIKFH…KDLKFKLSKM (181 aa)) is interaction with cup. An SAM domain is found at 600-654 (GIGLWLKSLRLHKYIELFKNMTYEEMLLITEDFLQSVGVTKGASHKLALCIDKLK). Disordered regions lie at residues 773–892 (HVKP…MQQM) and 943–977 (NGSN…QQPK). Polar residues-rich tracts occupy residues 801–822 (KSGS…NFSL) and 854–864 (HQPQYKSSSYP). Serine 971 carries the phosphoserine modification.

It belongs to the SMAUG family. In terms of assembly, interacts with oskar (osk). Binds to the 3'-UTR of nos. Interacts with cup, which in turn recruits eIF4-E, leading to an indirect interaction between smg and eIF4-E that prevents mRNA translation.

The protein resides in the cytoplasm. Functionally, translation regulator that binds to the 3'-UTR of specific mRNAs such as nanos (nos) and prevent their translation. Prevents translation of unlocalized nos in the bulk cytoplasm via the recruitment of cup. This is Protein Smaug from Drosophila sechellia (Fruit fly).